We begin with the raw amino-acid sequence, 216 residues long: Large ribosomal subunit protein uL3 (216 aa).

A disordered region spans residues 132–155 (QDASHGNSRSHRVPGSIGQNQTPG). An N5-methylglutamine modification is found at glutamine 152.

This sequence belongs to the universal ribosomal protein uL3 family. Part of the 50S ribosomal subunit. Forms a cluster with proteins L14 and L19. In terms of processing, methylated by PrmB.

Functionally, one of the primary rRNA binding proteins, it binds directly near the 3'-end of the 23S rRNA, where it nucleates assembly of the 50S subunit. In Legionella pneumophila (strain Paris), this protein is Large ribosomal subunit protein uL3.